Consider the following 603-residue polypeptide: Conglutin beta 2 (603 aa).

An N-terminal signal peptide occupies residues 1–30 (MANMRVKFPTLVLLLGIVFLMAVSIGIAYG). Basic and acidic residues predominate over residues 36-105 (KNHERPQERE…REPSRGREQE (70 aa)). Disordered regions lie at residues 36–177 (KNHE…RNPY), 343–363 (DGQEDEEQSRGQEQSHQDQGV), and 375–399 (LRKHAQSSSGKGKPSESGPFNLRSD). Low complexity predominate over residues 137 to 147 (QGSSSSSGRQS). Residues 148–172 (GYERREQREEREQQQEQDSRSESRR) are compositionally biased toward basic and acidic residues. The Cupin type-1 1 domain occupies 177-335 (YYFSYERFQT…TFNTRYEEIQ (159 aa)). Residues 381–393 (SSSGKGKPSESGP) show a composition bias toward low complexity. The Cupin type-1 2 domain maps to 394-554 (FNLRSDEPIY…TFPGSVEDVE (161 aa)). Residue asparagine 504 is glycosylated (N-linked (GlcNAc...) asparagine). The span at 564–574 (YFANAQPQQQQ) shows a compositional bias: low complexity. The segment at 564 to 583 (YFANAQPQQQQQREKEGRRG) is disordered.

Belongs to the 7S seed storage protein family. In terms of assembly, component of globulins complexes which accumulate in seeds.

Functionally, seed storage protein. Accumulates during seed development and is hydrolyzed after germination to provide a carbon and nitrogen source for the developing seedling. This Lupinus angustifolius (Narrow-leaved blue lupine) protein is Conglutin beta 2.